Here is a 211-residue protein sequence, read N- to C-terminus: Urease accessory protein UreG (211 aa).

Residue Gly11–Thr18 participates in GTP binding.

It belongs to the SIMIBI class G3E GTPase family. UreG subfamily. As to quaternary structure, homodimer. UreD, UreF and UreG form a complex that acts as a GTP-hydrolysis-dependent molecular chaperone, activating the urease apoprotein by helping to assemble the nickel containing metallocenter of UreC. The UreE protein probably delivers the nickel.

The protein localises to the cytoplasm. Facilitates the functional incorporation of the urease nickel metallocenter. This process requires GTP hydrolysis, probably effectuated by UreG. The polypeptide is Urease accessory protein UreG (Actinobacillus pleuropneumoniae serotype 5b (strain L20)).